The sequence spans 308 residues: Glutathione synthetase (308 aa).

In terms of domain architecture, ATP-grasp spans 117 to 300 (KLLPLSFPKF…LERDCWDYFE (184 aa)). 143–198 (YAEYGDIVLKPLYDYGGNGVCRICGRADVGAISSAMVERYEAPLVAQQFIDDISSD) contacts ATP. Mg(2+) is bound by residues E271 and N273.

It belongs to the prokaryotic GSH synthase family. Mg(2+) is required as a cofactor. Requires Mn(2+) as cofactor.

It carries out the reaction gamma-L-glutamyl-L-cysteine + glycine + ATP = glutathione + ADP + phosphate + H(+). It functions in the pathway sulfur metabolism; glutathione biosynthesis; glutathione from L-cysteine and L-glutamate: step 2/2. This is Glutathione synthetase from Anaplasma centrale.